Here is a 36-residue protein sequence, read N- to C-terminus: Photosystem I reaction center subunit VIII (36 aa).

A helical membrane pass occupies residues leucine 6–leucine 28.

It belongs to the PsaI family.

It localises to the plastid. It is found in the chloroplast thylakoid membrane. In terms of biological role, may help in the organization of the PsaL subunit. This is Photosystem I reaction center subunit VIII from Amborella trichopoda.